The sequence spans 83 residues: Cytochrome b559 subunit alpha (83 aa).

A helical membrane pass occupies residues 21–35; sequence VIHSITIPSLFIAGW. His-23 contacts heme.

It belongs to the PsbE/PsbF family. In terms of assembly, heterodimer of an alpha subunit and a beta subunit. PSII is composed of 1 copy each of membrane proteins PsbA, PsbB, PsbC, PsbD, PsbE, PsbF, PsbH, PsbI, PsbJ, PsbK, PsbL, PsbM, PsbT, PsbX, PsbY, PsbZ, Psb30/Ycf12, at least 3 peripheral proteins of the oxygen-evolving complex and a large number of cofactors. It forms dimeric complexes. Requires heme b as cofactor.

The protein resides in the plastid. It localises to the chloroplast thylakoid membrane. Its function is as follows. This b-type cytochrome is tightly associated with the reaction center of photosystem II (PSII). PSII is a light-driven water:plastoquinone oxidoreductase that uses light energy to abstract electrons from H(2)O, generating O(2) and a proton gradient subsequently used for ATP formation. It consists of a core antenna complex that captures photons, and an electron transfer chain that converts photonic excitation into a charge separation. The sequence is that of Cytochrome b559 subunit alpha from Ginkgo biloba (Ginkgo).